A 784-amino-acid chain; its full sequence is Lon protease (784 aa).

A Lon N-terminal domain is found at leucine 6 to isoleucine 207. ATP is bound at residue glycine 356 to threonine 363. The Lon proteolytic domain maps to glutamate 592 to glutamate 773. Residues serine 679 and lysine 722 contribute to the active site.

It belongs to the peptidase S16 family. As to quaternary structure, homohexamer. Organized in a ring with a central cavity.

It localises to the cytoplasm. It catalyses the reaction Hydrolysis of proteins in presence of ATP.. ATP-dependent serine protease that mediates the selective degradation of mutant and abnormal proteins as well as certain short-lived regulatory proteins. Required for cellular homeostasis and for survival from DNA damage and developmental changes induced by stress. Degrades polypeptides processively to yield small peptide fragments that are 5 to 10 amino acids long. Binds to DNA in a double-stranded, site-specific manner. This is Lon protease from Rickettsia prowazekii (strain Madrid E).